The following is a 301-amino-acid chain: Vomeronasal type-1 receptor 4 (301 aa).

Residues 1–5 lie on the Extracellular side of the membrane; sequence MASRY. A helical transmembrane segment spans residues 6 to 26; the sequence is VAVGMILSQTVVGVLGSFSVL. The Cytoplasmic portion of the chain corresponds to 27 to 48; that stretch reads LHYLSFYCTGCRLRSTDLIVKH. A helical membrane pass occupies residues 49 to 69; sequence LIVANFLALRCKGVPQTMAAF. Topologically, residues 70-88 are extracellular; the sequence is GVRYFLNALGCKLVFYLHR. Residues 89–109 form a helical membrane-spanning segment; the sequence is VGRGVSIGTTCLLSVFQVITV. Topologically, residues 110 to 126 are cytoplasmic; sequence SSRKSRWAKLKEKAPKH. The helical transmembrane segment at 127–147 threads the bilayer; it reads VGFSVLLCWIVCMLVNIIFPM. At 148–185 the chain is on the extracellular side; that stretch reads YVTGKWNYTNITVNEDLGYCSGGGNNKIAQTLRAMLLS. 2 N-linked (GlcNAc...) asparagine glycosylation sites follow: N154 and N157. The helical transmembrane segment at 186-206 threads the bilayer; the sequence is FPDVLCLGLMLWVSSSMVCIL. The Cytoplasmic segment spans residues 207 to 234; the sequence is HRHKQRVQHIDRSNLSPRASPENRATQS. A helical transmembrane segment spans residues 235-255; sequence ILILVSTFVSSYTLSCLFQVC. Residues 256–264 are Extracellular-facing; that stretch reads MALLDNPNS. A helical membrane pass occupies residues 265–285; it reads LLVNTSALMSVCFPTLSPFVL. At 286–301 the chain is on the cytoplasmic side; sequence MSCDPSVYRFCFAWKR.

It belongs to the G-protein coupled receptor 1 family.

The protein resides in the cell membrane. Its function is as follows. Putative pheromone receptor. This is Vomeronasal type-1 receptor 4 (VN1R4) from Homo sapiens (Human).